The following is a 178-amino-acid chain: SPbeta prophage-derived uncharacterized protein YonC (178 aa).

The polypeptide is SPbeta prophage-derived uncharacterized protein YonC (yonC) (Bacillus subtilis (strain 168)).